The primary structure comprises 107 residues: MKDLLGLMGKAKEMQAKFQAMQDEIATVESVGQAGGGLVSVILSGKFEMKSLKIDPSLFKEDEVEILEDLILAAHNDAKAKVEQIMQEKTKALTSGLPIPPGMKLPF.

This sequence belongs to the YbaB/EbfC family. Homodimer.

It localises to the cytoplasm. The protein localises to the nucleoid. Functionally, binds to DNA and alters its conformation. May be involved in regulation of gene expression, nucleoid organization and DNA protection. The sequence is that of Nucleoid-associated protein mlr5504 from Mesorhizobium japonicum (strain LMG 29417 / CECT 9101 / MAFF 303099) (Mesorhizobium loti (strain MAFF 303099)).